The primary structure comprises 892 residues: Putative GTP diphosphokinase RSH1, chloroplastic (892 aa).

A chloroplast-targeting transit peptide spans 1–52 (MQPPTGAVSGSSSSSLECVSSCRTSWRGGGRPYECSVLSCAWNAPRALTGAL). Positions 184–291 (FIIHPVEVAR…VKLADRLHNM (108 aa)) constitute an HD domain. Residues 574–637 (LGSRVFVFTP…ANAEVVEIII (64 aa)) enclose the TGS domain. Residues 809 to 880 (WLCIVCVDRK…MILGVLGWSV (72 aa)) form the ACT domain.

It belongs to the RelA/SpoT family.

It is found in the plastid. It localises to the chloroplast. It carries out the reaction GTP + ATP = guanosine 3'-diphosphate 5'-triphosphate + AMP. Functionally, may be involved in a rapid plant ppGpp (guanosine 3'-diphosphate 5'-diphosphate)-mediated response to pathogens and other stresses. The sequence is that of Putative GTP diphosphokinase RSH1, chloroplastic (RSH1) from Oryza sativa subsp. japonica (Rice).